We begin with the raw amino-acid sequence, 271 residues long: Ribosomal RNA small subunit methyltransferase A (271 aa).

Residues asparagine 28, leucine 30, glycine 54, glutamate 75, aspartate 99, and asparagine 117 each coordinate S-adenosyl-L-methionine.

This sequence belongs to the class I-like SAM-binding methyltransferase superfamily. rRNA adenine N(6)-methyltransferase family. RsmA subfamily.

Its subcellular location is the cytoplasm. It carries out the reaction adenosine(1518)/adenosine(1519) in 16S rRNA + 4 S-adenosyl-L-methionine = N(6)-dimethyladenosine(1518)/N(6)-dimethyladenosine(1519) in 16S rRNA + 4 S-adenosyl-L-homocysteine + 4 H(+). Specifically dimethylates two adjacent adenosines (A1518 and A1519) in the loop of a conserved hairpin near the 3'-end of 16S rRNA in the 30S particle. May play a critical role in biogenesis of 30S subunits. This is Ribosomal RNA small subunit methyltransferase A from Thermus thermophilus (strain ATCC 27634 / DSM 579 / HB8).